The primary structure comprises 410 residues: Phospho-N-acetylmuramoyl-pentapeptide-transferase (410 aa).

10 helical membrane passes run 27 to 47 (RMIL…PYFI), 77 to 97 (TPTM…VLWM), 99 to 119 (LTHI…LIGG), 140 to 160 (LFFQ…SSVN), 213 to 233 (PVVT…FFVI), 248 to 268 (GLLA…AFVS), 288 to 308 (IAIY…YNGY), 312 to 332 (VFMG…SAVL), 337 to 357 (FLLG…ILQV), and 389 to 409 (VIRF…SLKF).

It belongs to the glycosyltransferase 4 family. MraY subfamily. Mg(2+) is required as a cofactor.

It localises to the cell inner membrane. It carries out the reaction UDP-N-acetyl-alpha-D-muramoyl-L-alanyl-gamma-D-glutamyl-meso-2,6-diaminopimeloyl-D-alanyl-D-alanine + di-trans,octa-cis-undecaprenyl phosphate = di-trans,octa-cis-undecaprenyl diphospho-N-acetyl-alpha-D-muramoyl-L-alanyl-D-glutamyl-meso-2,6-diaminopimeloyl-D-alanyl-D-alanine + UMP. Its pathway is cell wall biogenesis; peptidoglycan biosynthesis. Its function is as follows. Catalyzes the initial step of the lipid cycle reactions in the biosynthesis of the cell wall peptidoglycan: transfers peptidoglycan precursor phospho-MurNAc-pentapeptide from UDP-MurNAc-pentapeptide onto the lipid carrier undecaprenyl phosphate, yielding undecaprenyl-pyrophosphoryl-MurNAc-pentapeptide, known as lipid I. In Protochlamydia amoebophila (strain UWE25), this protein is Phospho-N-acetylmuramoyl-pentapeptide-transferase.